Consider the following 159-residue polypeptide: Transcription elongation factor GreA (159 aa).

The protein belongs to the GreA/GreB family.

Its function is as follows. Necessary for efficient RNA polymerase transcription elongation past template-encoded arresting sites. The arresting sites in DNA have the property of trapping a certain fraction of elongating RNA polymerases that pass through, resulting in locked ternary complexes. Cleavage of the nascent transcript by cleavage factors such as GreA or GreB allows the resumption of elongation from the new 3'terminus. GreA releases sequences of 2 to 3 nucleotides. The chain is Transcription elongation factor GreA from Psychromonas ingrahamii (strain DSM 17664 / CCUG 51855 / 37).